The following is a 223-amino-acid chain: Phosphoribosylformylglycinamidine synthase subunit PurQ (223 aa).

The Glutamine amidotransferase type-1 domain occupies 2–223; sequence KTAIIQLPGL…FQSALELAKG (222 aa). The active-site Nucleophile is C86. Active-site residues include H196 and E198.

In terms of assembly, part of the FGAM synthase complex composed of 1 PurL, 1 PurQ and 2 PurS subunits.

Its subcellular location is the cytoplasm. It carries out the reaction N(2)-formyl-N(1)-(5-phospho-beta-D-ribosyl)glycinamide + L-glutamine + ATP + H2O = 2-formamido-N(1)-(5-O-phospho-beta-D-ribosyl)acetamidine + L-glutamate + ADP + phosphate + H(+). It catalyses the reaction L-glutamine + H2O = L-glutamate + NH4(+). It participates in purine metabolism; IMP biosynthesis via de novo pathway; 5-amino-1-(5-phospho-D-ribosyl)imidazole from N(2)-formyl-N(1)-(5-phospho-D-ribosyl)glycinamide: step 1/2. In terms of biological role, part of the phosphoribosylformylglycinamidine synthase complex involved in the purines biosynthetic pathway. Catalyzes the ATP-dependent conversion of formylglycinamide ribonucleotide (FGAR) and glutamine to yield formylglycinamidine ribonucleotide (FGAM) and glutamate. The FGAM synthase complex is composed of three subunits. PurQ produces an ammonia molecule by converting glutamine to glutamate. PurL transfers the ammonia molecule to FGAR to form FGAM in an ATP-dependent manner. PurS interacts with PurQ and PurL and is thought to assist in the transfer of the ammonia molecule from PurQ to PurL. The chain is Phosphoribosylformylglycinamidine synthase subunit PurQ from Bartonella henselae (strain ATCC 49882 / DSM 28221 / CCUG 30454 / Houston 1) (Rochalimaea henselae).